Consider the following 311-residue polypeptide: Porphobilinogen deaminase (311 aa).

Cys-241 bears the S-(dipyrrolylmethanemethyl)cysteine mark.

This sequence belongs to the HMBS family. As to quaternary structure, monomer. Dipyrromethane serves as cofactor.

The catalysed reaction is 4 porphobilinogen + H2O = hydroxymethylbilane + 4 NH4(+). Its pathway is porphyrin-containing compound metabolism; protoporphyrin-IX biosynthesis; coproporphyrinogen-III from 5-aminolevulinate: step 2/4. In terms of biological role, tetrapolymerization of the monopyrrole PBG into the hydroxymethylbilane pre-uroporphyrinogen in several discrete steps. In Bacillus pumilus (strain SAFR-032), this protein is Porphobilinogen deaminase.